A 408-amino-acid polypeptide reads, in one-letter code: Chaperone protein dnaJ 1, mitochondrial (408 aa).

A mitochondrion-targeting transit peptide spans M1–G26. Residues N48–Q113 enclose the J domain. The CR-type zinc finger occupies G173–T247. Zn(2+)-binding residues include C186, C189, C203, C206, C221, C224, C235, and C238. CXXCXGXG motif repeat units lie at residues C186–G193, C203–G210, C221–G228, and C235–G242.

It belongs to the DnaJ family. B/II subfamily. Homodimer. Zn(2+) serves as cofactor. As to expression, ubiquitous.

The protein resides in the mitochondrion. Functionally, plays a continuous role in plant development probably in the structural organization of compartments. In Arabidopsis thaliana (Mouse-ear cress), this protein is Chaperone protein dnaJ 1, mitochondrial (ATJ1).